The primary structure comprises 469 residues: tRNA modification GTPase MnmE (469 aa).

(6S)-5-formyl-5,6,7,8-tetrahydrofolate is bound by residues arginine 26, glutamate 88, and arginine 127. Positions 222–390 (GLKVAIVGRP…LEDAILHLVQ (169 aa)) constitute a TrmE-type G domain. Asparagine 232 contributes to the K(+) binding site. GTP-binding positions include 232-237 (NVGKSS), 251-257 (TDLPGTT), 276-279 (DTAG), and 344-347 (NKAD). Position 236 (serine 236) interacts with Mg(2+). K(+) contacts are provided by threonine 251, leucine 253, and threonine 256. Threonine 257 provides a ligand contact to Mg(2+). Lysine 469 contributes to the (6S)-5-formyl-5,6,7,8-tetrahydrofolate binding site.

It belongs to the TRAFAC class TrmE-Era-EngA-EngB-Septin-like GTPase superfamily. TrmE GTPase family. As to quaternary structure, homodimer. Heterotetramer of two MnmE and two MnmG subunits. K(+) is required as a cofactor.

The protein resides in the cytoplasm. Its function is as follows. Exhibits a very high intrinsic GTPase hydrolysis rate. Involved in the addition of a carboxymethylaminomethyl (cmnm) group at the wobble position (U34) of certain tRNAs, forming tRNA-cmnm(5)s(2)U34. In Synechococcus elongatus, this protein is tRNA modification GTPase MnmE.